The following is a 129-amino-acid chain: M-zodatoxin-Lt8e (129 aa).

An N-terminal signal peptide occupies residues 1 to 20 (MKYFVVALALVAAFVCIAES). The propeptide occupies 21 to 60 (KPAESEHELAEVEEENELADLEDAVWLEHLADLSDLEEAR). The Processing quadruplet motif signature appears at 57–60 (EEAR).

In terms of processing, cleavage of the propeptide depends on the processing quadruplet motif (XXXR, with at least one of X being E). In terms of tissue distribution, expressed by the venom gland.

The protein resides in the secreted. Functionally, insecticidal, cytolytic and antimicrobial peptide. Forms voltage-dependent, ion-permeable channels in membranes. At high concentration causes cell membrane lysis. The protein is M-zodatoxin-Lt8e (cit 1-5) of Lachesana tarabaevi (Spider).